A 382-amino-acid chain; its full sequence is F-box protein At3g27290 (382 aa).

Residues 16-105 (RKLELGLGEF…VDQMLFETLS (90 aa)) enclose the F-box domain.

The protein is F-box protein At3g27290 of Arabidopsis thaliana (Mouse-ear cress).